A 265-amino-acid polypeptide reads, in one-letter code: 4-hydroxy-tetrahydrodipicolinate reductase (265 aa).

NAD(+)-binding positions include 7–12, Asp33, 96–98, and 120–123; these read GASGRM, GTT, and AANM. The active-site Proton donor/acceptor is the His153. A (S)-2,3,4,5-tetrahydrodipicolinate-binding site is contributed by His154. The active-site Proton donor is Lys157. 163 to 164 lines the (S)-2,3,4,5-tetrahydrodipicolinate pocket; the sequence is GT.

Belongs to the DapB family.

It localises to the cytoplasm. The catalysed reaction is (S)-2,3,4,5-tetrahydrodipicolinate + NAD(+) + H2O = (2S,4S)-4-hydroxy-2,3,4,5-tetrahydrodipicolinate + NADH + H(+). It catalyses the reaction (S)-2,3,4,5-tetrahydrodipicolinate + NADP(+) + H2O = (2S,4S)-4-hydroxy-2,3,4,5-tetrahydrodipicolinate + NADPH + H(+). It participates in amino-acid biosynthesis; L-lysine biosynthesis via DAP pathway; (S)-tetrahydrodipicolinate from L-aspartate: step 4/4. Functionally, catalyzes the conversion of 4-hydroxy-tetrahydrodipicolinate (HTPA) to tetrahydrodipicolinate. This Cupriavidus pinatubonensis (strain JMP 134 / LMG 1197) (Cupriavidus necator (strain JMP 134)) protein is 4-hydroxy-tetrahydrodipicolinate reductase.